Here is a 332-residue protein sequence, read N- to C-terminus: Eukaryotic translation initiation factor 3 subunit H (332 aa).

Positions 18–153 (VQVDGLTVLK…LKAFRLSDEM (136 aa)) constitute an MPN domain. The segment at 251-285 (QQQKENYLQRRQQENQSRIQRGEDPLPDEDLSKMF) is disordered.

Belongs to the eIF-3 subunit H family. In terms of assembly, component of the eukaryotic translation initiation factor 3 (eIF-3) complex.

Its subcellular location is the cytoplasm. In terms of biological role, component of the eukaryotic translation initiation factor 3 (eIF-3) complex, which is involved in protein synthesis of a specialized repertoire of mRNAs and, together with other initiation factors, stimulates binding of mRNA and methionyl-tRNAi to the 40S ribosome. The eIF-3 complex specifically targets and initiates translation of a subset of mRNAs involved in cell proliferation. The protein is Eukaryotic translation initiation factor 3 subunit H of Nematostella vectensis (Starlet sea anemone).